A 239-amino-acid polypeptide reads, in one-letter code: Small ribosomal subunit protein uS2c (239 aa).

Belongs to the universal ribosomal protein uS2 family.

It localises to the plastid. The protein localises to the organellar chromatophore. This Paulinella chromatophora protein is Small ribosomal subunit protein uS2c (rps2).